Consider the following 196-residue polypeptide: DnaA initiator-associating protein DiaA (196 aa).

The SIS domain maps to 34–196 (LVQSLLNGNK…DNTLFPHQDD (163 aa)).

This sequence belongs to the SIS family. DiaA subfamily. As to quaternary structure, homotetramer; dimer of dimers.

In terms of biological role, required for the timely initiation of chromosomal replication via direct interactions with the DnaA initiator protein. The polypeptide is DnaA initiator-associating protein DiaA (Yersinia enterocolitica serotype O:8 / biotype 1B (strain NCTC 13174 / 8081)).